Here is a 142-residue protein sequence, read N- to C-terminus: MKTFVAKPAAVKRDWYVVDAEGKTLGRIATEIASRLRGKHKAEYTPHVDTGDYIIVINAEKVRVTGKKASDKIYYRHSEFPGGLKSISFEKLIDRKPEMVIELAVKGMLPRGPLGRAMYRKLKVYAGAEHNHTAQQPQVLDI.

This sequence belongs to the universal ribosomal protein uL13 family. In terms of assembly, part of the 50S ribosomal subunit.

Its function is as follows. This protein is one of the early assembly proteins of the 50S ribosomal subunit, although it is not seen to bind rRNA by itself. It is important during the early stages of 50S assembly. This is Large ribosomal subunit protein uL13 from Aliivibrio fischeri (strain ATCC 700601 / ES114) (Vibrio fischeri).